A 2890-amino-acid chain; its full sequence is Bifunctional DNA-directed RNA polymerase subunit beta-beta' (2890 aa).

A DNA-directed RNA polymerase subunit beta region spans residues 1–1377 (MSKKIPLKNR…DINIFGDDVD (1377 aa)). The interval 1384–2890 (PIVIKEDDRP…LRTLEDGPKF (1507 aa)) is DNA-directed RNA polymerase subunit beta'. C1449, C1451, C1465, and C1468 together coordinate Zn(2+). Mg(2+) contacts are provided by D1849, D1851, and D1853. Zn(2+) contacts are provided by C2179, C2253, C2260, and C2263.

The protein in the N-terminal section; belongs to the RNA polymerase beta chain family. This sequence in the C-terminal section; belongs to the RNA polymerase beta' chain family. The RNAP catalytic core consists of 2 alpha, 1 beta/beta' and 1 omega subunit. When a sigma factor is associated with the core the holoenzyme is formed, which can initiate transcription. It depends on Mg(2+) as a cofactor. The cofactor is Zn(2+).

The enzyme catalyses RNA(n) + a ribonucleoside 5'-triphosphate = RNA(n+1) + diphosphate. Functionally, DNA-dependent RNA polymerase catalyzes the transcription of DNA into RNA using the four ribonucleoside triphosphates as substrates. In Helicobacter pylori (strain HPAG1), this protein is Bifunctional DNA-directed RNA polymerase subunit beta-beta' (rpoBC).